The chain runs to 504 residues: Anaerobic nitric oxide reductase transcription regulator NorR (504 aa).

Asp-57 carries the 4-aspartylphosphate modification. Residues Met-187–Val-416 form the Sigma-54 factor interaction domain. Residues Gly-215–Glu-222 and Ala-278–Glu-287 contribute to the ATP site. A DNA-binding region (H-T-H motif) is located at residues Trp-479 to Lys-498.

It participates in nitrogen metabolism; nitric oxide reduction. Functionally, required for the expression of anaerobic nitric oxide (NO) reductase, acts as a transcriptional activator for at least the norVW operon. Activation also requires sigma-54. In Escherichia coli O6:H1 (strain CFT073 / ATCC 700928 / UPEC), this protein is Anaerobic nitric oxide reductase transcription regulator NorR.